The following is a 426-amino-acid chain: Histidine--tRNA ligase (426 aa).

It belongs to the class-II aminoacyl-tRNA synthetase family. Homodimer.

Its subcellular location is the cytoplasm. It catalyses the reaction tRNA(His) + L-histidine + ATP = L-histidyl-tRNA(His) + AMP + diphosphate + H(+). In Streptococcus pyogenes serotype M1, this protein is Histidine--tRNA ligase.